The following is a 326-amino-acid chain: Diaminopimelate epimerase (326 aa).

Residues Asn13 and Asn72 each contribute to the substrate site. Residue Cys81 is the Proton donor of the active site. Substrate contacts are provided by residues 82 to 83, Asn169, Asn205, and 223 to 224; these read GN and ER. The active-site Proton acceptor is the Cys232. Substrate is bound at residue 233-234; the sequence is GT.

The protein belongs to the diaminopimelate epimerase family. In terms of assembly, homodimer.

The protein resides in the cytoplasm. The enzyme catalyses (2S,6S)-2,6-diaminopimelate = meso-2,6-diaminopimelate. It functions in the pathway amino-acid biosynthesis; L-lysine biosynthesis via DAP pathway; DL-2,6-diaminopimelate from LL-2,6-diaminopimelate: step 1/1. Its function is as follows. Catalyzes the stereoinversion of LL-2,6-diaminopimelate (L,L-DAP) to meso-diaminopimelate (meso-DAP), a precursor of L-lysine and an essential component of the bacterial peptidoglycan. The chain is Diaminopimelate epimerase from Enterococcus faecalis (strain ATCC 700802 / V583).